We begin with the raw amino-acid sequence, 280 residues long: Ribonuclease P protein subunit p38 (280 aa).

Alanine 2 is modified (N-acetylalanine). A phosphoserine mark is found at serine 12, serine 221, and serine 230. Residues 202 to 227 (WLPDRTQGPTDSLETEPSESQDNEIL) form a disordered region. A compositionally biased stretch (acidic residues) spans 214–226 (LETEPSESQDNEI). Positions 254 to 280 (QPLKIKKLIPNPSKIRKPPKSKKSISK) are disordered. Residues 267–280 (KIRKPPKSKKSISK) show a composition bias toward basic residues.

Belongs to the eukaryotic ribosomal protein eL8 family. In terms of assembly, component of nuclear RNase P and RNase MRP ribonucleoproteins. RNase P consists of a catalytic RNA moiety and about 10 protein subunits; POP1, POP4, POP5, POP7, RPP14, RPP21, RPP25, RPP30, RPP38 and RPP40. Within the RNase P complex, POP1, POP7 and RPP25 form the 'finger' subcomplex, POP5, RPP14, RPP40 and homodimeric RPP30 form the 'palm' subcomplex, and RPP21, POP4 and RPP38 form the 'wrist' subcomplex. All subunits of the RNase P complex interact with the catalytic RNA. Several subunits of RNase P are also part of the RNase MRP complex. RNase MRP consists of a catalytic RNA moiety and about 8 protein subunits; POP1, POP7, RPP25, RPP30, RPP38, RPP40 and possibly also POP4 and POP5.

It localises to the nucleus. The protein localises to the nucleolus. Functionally, component of ribonuclease P, a ribonucleoprotein complex that generates mature tRNA molecules by cleaving their 5'-ends. Also a component of the MRP ribonuclease complex, which cleaves pre-rRNA sequences. In Mus musculus (Mouse), this protein is Ribonuclease P protein subunit p38 (Rpp38).